Consider the following 225-residue polypeptide: uncharacterized protein (225 aa).

This is an uncharacterized protein from Bacillus subtilis (strain 168).